We begin with the raw amino-acid sequence, 229 residues long: PKHD-type hydroxylase BRADO6316 (229 aa).

One can recognise a Fe2OG dioxygenase domain in the interval 78-180 (QIFPPLFNRY…RVASFFWLQS (103 aa)). Fe cation contacts are provided by His98, Asp100, and His161. Residue Arg171 participates in 2-oxoglutarate binding.

It depends on Fe(2+) as a cofactor. L-ascorbate is required as a cofactor.

The protein is PKHD-type hydroxylase BRADO6316 of Bradyrhizobium sp. (strain ORS 278).